The chain runs to 608 residues: Chaperone protein HtpG (608 aa).

Residues Met1–Arg332 form an a; substrate-binding region. The tract at residues Glu333 to Gln536 is b. A c region spans residues Leu537–Ser608.

This sequence belongs to the heat shock protein 90 family. Homodimer.

It is found in the cytoplasm. Its function is as follows. Molecular chaperone. Has ATPase activity. This chain is Chaperone protein HtpG, found in Campylobacter jejuni subsp. jejuni serotype O:23/36 (strain 81-176).